Here is a 21-residue protein sequence, read N- to C-terminus: Ocellatin-3 (21 aa).

I21 is subject to Isoleucine amide.

In terms of tissue distribution, expressed by the skin dorsal glands.

It localises to the secreted. Its function is as follows. Has hemolytic activity against human erythrocytes and antibacterial activity against the Gram-negative bacterium E.coli. This is Ocellatin-3 from Leptodactylus ocellatus (Argus frog).